The sequence spans 453 residues: Protein vestigial (453 aa).

The disordered stretch occupies residues 145-279 (AAGHSLHSSH…GGGLAGSGQG (135 aa)). Over residues 151-177 (HSSHRTHAHSLAHAHTHPHSHTHTHTH) the composition is skewed to basic residues. Over residues 178–193 (QTKEEDLIVPRSEAEA) the composition is skewed to basic and acidic residues. Composition is skewed to gly residues over residues 227–253 (HGGGGATGGPSSAGGTGSGGGDGGGTG) and 267–278 (GSGGGGLAGSGQ). A ser-rich sd binding domain region spans residues 279–335 (GQAQYLSASCVVFTNYSGDTASQVDEHFSRALNYNNKDSKESSSPMSNRNFPPSFWN).

As to quaternary structure, the Ser-rich protein domain within the C-terminal region interacts with the C-terminus of sd to form a complex which acts as a selector for wing development. Interacts with Dhfr. As to expression, expressed in the developing wing primordia initially along the D/V wing boundary, and by the late third larval instar, maximal expression is seen in cells at the D/V wing disk boundary. Less expression is seen in cells located farther from this boundary.

It localises to the nucleus. In terms of biological role, involved in determining which thoracic imaginal disk cells will form wings and halteres, perhaps by interacting with other nuclear regulatory proteins. When in combination with scalloped (sd), it acts as a transcriptional activation complex that regulates gene expression in the wing. Binding to sd switches the DNA target selectivity of sd. Required and sufficient for cell proliferation at the dorsal/ventral (D/V) boundary of the wing imaginal disk. Also required for cell proliferation in the wing imaginal disk, mediated via activation of E2f. By interacting with Dhfr, may control genes involved in DNA replication. In Drosophila melanogaster (Fruit fly), this protein is Protein vestigial (vg).